Reading from the N-terminus, the 620-residue chain is DNA mismatch repair protein MutL (620 aa).

This sequence belongs to the DNA mismatch repair MutL/HexB family.

Its function is as follows. This protein is involved in the repair of mismatches in DNA. It is required for dam-dependent methyl-directed DNA mismatch repair. May act as a 'molecular matchmaker', a protein that promotes the formation of a stable complex between two or more DNA-binding proteins in an ATP-dependent manner without itself being part of a final effector complex. This chain is DNA mismatch repair protein MutL, found in Clostridium tetani (strain Massachusetts / E88).